Here is a 279-residue protein sequence, read N- to C-terminus: Thymidylate synthase (279 aa).

133 to 134 (RR) is a dUMP binding site. The Nucleophile role is filled by Cys-154. DUMP is bound by residues 178 to 181 (RSND), Asn-189, and 219 to 221 (HIY). (6R)-5,10-methylene-5,6,7,8-tetrahydrofolate is bound at residue Asp-181. Ala-278 is a (6R)-5,10-methylene-5,6,7,8-tetrahydrofolate binding site.

Belongs to the thymidylate synthase family. Bacterial-type ThyA subfamily. As to quaternary structure, homodimer.

It localises to the cytoplasm. It carries out the reaction dUMP + (6R)-5,10-methylene-5,6,7,8-tetrahydrofolate = 7,8-dihydrofolate + dTMP. It participates in pyrimidine metabolism; dTTP biosynthesis. Its function is as follows. Catalyzes the reductive methylation of 2'-deoxyuridine-5'-monophosphate (dUMP) to 2'-deoxythymidine-5'-monophosphate (dTMP) while utilizing 5,10-methylenetetrahydrofolate (mTHF) as the methyl donor and reductant in the reaction, yielding dihydrofolate (DHF) as a by-product. This enzymatic reaction provides an intracellular de novo source of dTMP, an essential precursor for DNA biosynthesis. The sequence is that of Thymidylate synthase from Streptococcus agalactiae serotype Ia (strain ATCC 27591 / A909 / CDC SS700).